The sequence spans 417 residues: Phosphoglycerate kinase (417 aa).

(2R)-3-phosphoglycerate contacts are provided by Val23, Asp24, Phe25, Asn26, Gln38, Arg39, Ser62, His63, Gly65, Arg66, Leu121, Arg122, His169, and Arg170. ADP is bound at residue Gly213. A CDP-binding site is contributed by Gly213. Residues Ala214 and Lys215 each contribute to the AMP site. Ala214 provides a ligand contact to ATP. A Mg(2+)-binding site is contributed by Ala214. Asp218 serves as a coordination point for CDP. A Mg(2+)-binding site is contributed by Asp218. Lys219 contacts AMP. ATP is bound at residue Lys219. Gly237 serves as a coordination point for ADP. CDP is bound at residue Gly237. Gly238 and Gly312 together coordinate AMP. Positions 238 and 312 each coordinate ATP. CDP-binding residues include Gly337 and Phe342. Phe342 is a binding site for ADP. Glu343 is an AMP binding site. ATP-binding residues include Glu343, Asp374, and Thr375. A Mg(2+)-binding site is contributed by Asp374.

The protein belongs to the phosphoglycerate kinase family. Monomer. Mg(2+) is required as a cofactor.

Its subcellular location is the cytoplasm. The protein localises to the secreted. It localises to the cell wall. It is found in the mitochondrion. The enzyme catalyses (2R)-3-phosphoglycerate + ATP = (2R)-3-phospho-glyceroyl phosphate + ADP. Its pathway is carbohydrate degradation; glycolysis; pyruvate from D-glyceraldehyde 3-phosphate: step 2/5. In terms of biological role, catalyzes one of the two ATP producing reactions in the glycolytic pathway via the reversible conversion of 1,3-diphosphoglycerate to 3-phosphoglycerate. Both L- and D- forms of purine and pyrimidine nucleotides can be used as substrates, but the activity is much lower on pyrimidines. Negatively regulates the biosynthesis of acetyl-CoA from pyruvate in the mitochondrion. This Candida albicans (strain SC5314 / ATCC MYA-2876) (Yeast) protein is Phosphoglycerate kinase (PGK1).